We begin with the raw amino-acid sequence, 50 residues long: MATKKAALACSVCGSRNYSKSVSEGKRGERLEINKFCKYCNQYTLHKETK.

It belongs to the bacterial ribosomal protein bL33 family.

The protein is Large ribosomal subunit protein bL33B (rpmG2) of Enterococcus faecalis (strain ATCC 700802 / V583).